The primary structure comprises 293 residues: Vibriobactin-specific isochorismatase (293 aa).

A Carrier domain is found at 211-287 (KLTGLSLRTM…QWWQTIQANL (77 aa)). Ser248 bears the O-(pantetheine 4'-phosphoryl)serine mark.

Belongs to the isochorismatase family. It depends on pantetheine 4'-phosphate as a cofactor.

The catalysed reaction is isochorismate + H2O = (2S,3S)-2,3-dihydroxy-2,3-dihydrobenzoate + pyruvate. The protein operates within siderophore biosynthesis; vibriobactin biosynthesis. Functionally, involved in the biosynthesis of the catechol siderophore vibriobactin. Vibriobactin is a chelating compound involved in transporting iron from the bacterial environment into the cell cytoplasm. This Vibrio cholerae serotype O1 (strain ATCC 39541 / Classical Ogawa 395 / O395) protein is Vibriobactin-specific isochorismatase (vibB).